A 381-amino-acid chain; its full sequence is Succinyl-diaminopimelate desuccinylase (381 aa).

H68 provides a ligand contact to Zn(2+). Residue D70 is part of the active site. D101 provides a ligand contact to Zn(2+). Catalysis depends on E135, which acts as the Proton acceptor. Zn(2+) contacts are provided by E136, E164, and H350.

The protein belongs to the peptidase M20A family. DapE subfamily. In terms of assembly, homodimer. Requires Zn(2+) as cofactor. Co(2+) serves as cofactor.

It carries out the reaction N-succinyl-(2S,6S)-2,6-diaminopimelate + H2O = (2S,6S)-2,6-diaminopimelate + succinate. Its pathway is amino-acid biosynthesis; L-lysine biosynthesis via DAP pathway; LL-2,6-diaminopimelate from (S)-tetrahydrodipicolinate (succinylase route): step 3/3. In terms of biological role, catalyzes the hydrolysis of N-succinyl-L,L-diaminopimelic acid (SDAP), forming succinate and LL-2,6-diaminopimelate (DAP), an intermediate involved in the bacterial biosynthesis of lysine and meso-diaminopimelic acid, an essential component of bacterial cell walls. In Neisseria gonorrhoeae (strain NCCP11945), this protein is Succinyl-diaminopimelate desuccinylase.